We begin with the raw amino-acid sequence, 131 residues long: MSIRWLFPKLTPRKVARILILLALPIIALTQSQSLRHSQDDAMLHIKPYDGAALPDGFYVYQRLNEKGIAIKSITPEQDSLIVRLASPEQSIAARDVLRLSLPKVTITAQQATTPTPFWQQKLTQKQSKLG.

The Cytoplasmic segment spans residues 1–14; that stretch reads MSIRWLFPKLTPRK. The chain crosses the membrane as a helical span at residues 15 to 31; sequence VARILILLALPIIALTQ. Topologically, residues 32–131 are periplasmic; sequence SQSLRHSQDD…KLTQKQSKLG (100 aa).

The protein belongs to the MzrA family. In terms of assembly, interacts with EnvZ.

The protein resides in the cell inner membrane. Its function is as follows. Modulates the activity of the EnvZ/OmpR two-component regulatory system, probably by directly modulating EnvZ enzymatic activity and increasing stability of phosphorylated OmpR. In Pectobacterium carotovorum subsp. carotovorum (strain PC1), this protein is Modulator protein MzrA.